A 331-amino-acid polypeptide reads, in one-letter code: Phosphate acyltransferase (331 aa).

Belongs to the PlsX family. As to quaternary structure, homodimer. Probably interacts with PlsY.

The protein localises to the cytoplasm. The catalysed reaction is a fatty acyl-[ACP] + phosphate = an acyl phosphate + holo-[ACP]. It functions in the pathway lipid metabolism; phospholipid metabolism. Functionally, catalyzes the reversible formation of acyl-phosphate (acyl-PO(4)) from acyl-[acyl-carrier-protein] (acyl-ACP). This enzyme utilizes acyl-ACP as fatty acyl donor, but not acyl-CoA. In Malacoplasma penetrans (strain HF-2) (Mycoplasma penetrans), this protein is Phosphate acyltransferase.